We begin with the raw amino-acid sequence, 879 residues long: MAGKSTPMMEQYLALKAEASAGGDDCLLFYRMGDFFELFFEDAKVASGILDIALTARGKDSGEPVPMCGVPVHSAEGYLARLIKAGQRVAIAEQVETPEEAKARARREGKPVSKVLVKRDIVRFVTAGTLTEEALLEPRRANVLAAVCEVRGTLGIAHCDISTGRMELEECAPDAMDAALARLGASEVVAPENWDGAPADATLRPPSEFASDEGEARLKAIHDVATLDGFGDFSRAMLAAAGGLIGYLDHAGRGTLPFLLPPVVARGEAKLAMDAATRSSLEILVSQQDARSGSLIAAVDRCVTGAGARQLAEDLAAPLTEREPIERRLALVHFFHADPLLRADLREVMRAVPDLARALGRIVAGRGSPRDLGQIRDGLAEARRIRDYLASKPDRPALLDDLLPAMGGHGALVDHLQRALVPAPPTAREQGGYIAAGFDAALDELRDVSGNARRAIAALETRYRGETGIERLKIKHNGVLGYFIEVPAKHADALMAPDSGFTHRQTMAGAVRFNSLQLHEEASRISEAGGRALAAEEAHFEELVATVGDAREAIARTADALARIDVAAGLAERAAEGDWCKPAITDERVLDIVGGRHPVVEAALKQAGDRFVPNDCTLSGSDRLWLIGGPNMGGKSTFLRQNALIVLLAQAGSYVPASTATIGLVDRLFSRVGASDNLARGRSTFMVEMVETAAILAQASDRSFVILDEVGRGTSTYDGLALAWAVVEAVHETIQCRCLFATHYHELARLAETCDSLSLHHVRAREWKGDLVLLHELAEGPADRSYGLAVAKLAGVPAPVVKRARSVLEKLEKGREETGGLAAGLGELPLFAAALEERPEKIGDSMREKLAALDIDALSPREALDLLYALKTEASQTED.

Residue 629-636 (GPNMGGKS) participates in ATP binding.

The protein belongs to the DNA mismatch repair MutS family.

Its function is as follows. This protein is involved in the repair of mismatches in DNA. It is possible that it carries out the mismatch recognition step. This protein has a weak ATPase activity. This Erythrobacter litoralis (strain HTCC2594) protein is DNA mismatch repair protein MutS.